The primary structure comprises 345 residues: Biotin synthase (345 aa).

Residues 49–276 (NQVQMSTLLS…ASFVRLSAGR (228 aa)) form the Radical SAM core domain. The [4Fe-4S] cluster site is built by Cys-64, Cys-68, and Cys-71. Cys-108, Cys-139, Cys-199, and Arg-271 together coordinate [2Fe-2S] cluster.

Belongs to the radical SAM superfamily. Biotin synthase family. As to quaternary structure, homodimer. [4Fe-4S] cluster serves as cofactor. It depends on [2Fe-2S] cluster as a cofactor.

It carries out the reaction (4R,5S)-dethiobiotin + (sulfur carrier)-SH + 2 reduced [2Fe-2S]-[ferredoxin] + 2 S-adenosyl-L-methionine = (sulfur carrier)-H + biotin + 2 5'-deoxyadenosine + 2 L-methionine + 2 oxidized [2Fe-2S]-[ferredoxin]. The protein operates within cofactor biosynthesis; biotin biosynthesis; biotin from 7,8-diaminononanoate: step 2/2. In terms of biological role, catalyzes the conversion of dethiobiotin (DTB) to biotin by the insertion of a sulfur atom into dethiobiotin via a radical-based mechanism. This chain is Biotin synthase, found in Nitrosococcus oceani (strain ATCC 19707 / BCRC 17464 / JCM 30415 / NCIMB 11848 / C-107).